Reading from the N-terminus, the 321-residue chain is Bifunctional methyltransferase/endonuclease (321 aa).

The interval 1 to 86 is probable methylated-DNA--protein-cysteine methyltransferase; that stretch reads MLSVDYENFD…PLGSAEKMRR (86 aa). Cys61 is an active-site residue. Residues 87–318 are endonuclease V; it reads LIRDGITITN…YDFSTRNTAI (232 aa). The Mg(2+) site is built by Asp145 and Asp204.

It in the N-terminal section; belongs to the MGMT family. The protein in the C-terminal section; belongs to the endonuclease V family. Requires Mg(2+) as cofactor.

The protein localises to the cytoplasm. The catalysed reaction is Endonucleolytic cleavage at apurinic or apyrimidinic sites to products with a 5'-phosphate.. DNA repair enzyme involved in the repair of deaminated bases. Selectively cleaves double-stranded DNA at the second phosphodiester bond 3' to a deoxyinosine leaving behind the intact lesion on the nicked DNA. This chain is Bifunctional methyltransferase/endonuclease, found in Thermoplasma volcanium (strain ATCC 51530 / DSM 4299 / JCM 9571 / NBRC 15438 / GSS1).